Reading from the N-terminus, the 208-residue chain is MAVHVVDHPLVRHKLGILREDGISTSRFRALAQEISRLLTYEATKDLATEAKTITGWAGEVEVEEIKGKKITVVPILRAGLGMMDGVLDMVPGARVSVVGFYRDEETLQPVEYYVKLASNIDERIALILDPMLATGGTLMATIDLLKKSGCTNIKGLFLVAAPEGIEKIVKAHPDVDIYTASIDEKLNDAGYILPGLGDAGDKIFGTK.

Residues Arg-78, Arg-103, and Asp-130 to Thr-138 contribute to the 5-phospho-alpha-D-ribose 1-diphosphate site. Uracil-binding positions include Ile-193 and Gly-198 to Ala-200. Asp-199 contacts 5-phospho-alpha-D-ribose 1-diphosphate.

It belongs to the UPRTase family. It depends on Mg(2+) as a cofactor.

The catalysed reaction is UMP + diphosphate = 5-phospho-alpha-D-ribose 1-diphosphate + uracil. The protein operates within pyrimidine metabolism; UMP biosynthesis via salvage pathway; UMP from uracil: step 1/1. Its activity is regulated as follows. Allosterically activated by GTP. Its function is as follows. Catalyzes the conversion of uracil and 5-phospho-alpha-D-ribose 1-diphosphate (PRPP) to UMP and diphosphate. In Maridesulfovibrio salexigens (strain ATCC 14822 / DSM 2638 / NCIMB 8403 / VKM B-1763) (Desulfovibrio salexigens), this protein is Uracil phosphoribosyltransferase.